Here is a 177-residue protein sequence, read N- to C-terminus: Isopentenyl-diphosphate Delta-isomerase (177 aa).

His-22 and His-28 together coordinate Mn(2+). Residues 26 to 160 enclose the Nudix hydrolase domain; the sequence is LRHMAISVFV…PERFTPWLRI (135 aa). Residue Cys-62 is part of the active site. His-64 is a Mn(2+) binding site. Glu-82 provides a ligand contact to Mg(2+). The Mn(2+) site is built by Glu-108 and Glu-110. Glu-110 is a catalytic residue.

This sequence belongs to the IPP isomerase type 1 family. Mg(2+) serves as cofactor. The cofactor is Mn(2+).

The protein resides in the cytoplasm. The catalysed reaction is isopentenyl diphosphate = dimethylallyl diphosphate. The protein operates within isoprenoid biosynthesis; dimethylallyl diphosphate biosynthesis; dimethylallyl diphosphate from isopentenyl diphosphate: step 1/1. Its pathway is porphyrin-containing compound metabolism; chlorophyll biosynthesis. In terms of biological role, catalyzes the 1,3-allylic rearrangement of the homoallylic substrate isopentenyl (IPP) to its highly electrophilic allylic isomer, dimethylallyl diphosphate (DMAPP). The chain is Isopentenyl-diphosphate Delta-isomerase from Cereibacter sphaeroides (strain ATCC 17029 / ATH 2.4.9) (Rhodobacter sphaeroides).